The following is a 705-amino-acid chain: Tetratricopeptide repeat protein 12 (705 aa).

The residue at position 71 (Thr71) is a Phosphothreonine. 3 TPR repeats span residues 106–139, 140–173, and 174–207; these read ADALKEKGNEAFAEGNYETAILRYSEGLEKLKDM, KVLYTNRAQAYMKLEDYEKALVDCEWALKCDEKC, and TKAYFHMGKANLALKNYSVSRECYKKILEINPKL.

In terms of tissue distribution, expressed in testis and in epithelial cells of trachea and bronchial tube.

Its subcellular location is the cytoplasm. Functionally, cytoplasmic protein that plays a role in the proper assembly of dynein arm complexes in motile cilia in both respiratory cells and sperm flagella. The polypeptide is Tetratricopeptide repeat protein 12 (TTC12) (Homo sapiens (Human)).